Consider the following 213-residue polypeptide: CDP-diacylglycerol--inositol 3-phosphatidyltransferase (213 aa).

Residues 1-5 (MPDEN) are Cytoplasmic-facing. A helical membrane pass occupies residues 6 to 26 (IFLFVPNLIGYARIVFAIISF). Position 27 (Tyr-27) is a topological domain, lumenal. A helical transmembrane segment spans residues 28–48 (FMPCCPLTASSFYLLSGLLDA). Positions 47 and 50 each coordinate Mg(2+). Residues 49–73 (FDGHAARALNQGTRFGAMLDMLTDR) lie on the Cytoplasmic side of the membrane. A CDP-1,2-diacyl-sn-glycerol is bound by residues Gly-51, Arg-55, and Thr-61. Asp-68 and Asp-72 together coordinate Mg(2+). Asp-72 serves as the catalytic Proton acceptor. A helical membrane pass occupies residues 74 to 94 (CSTMCLLVNLALLYPGATLFF). Gln-95 is a topological domain (lumenal). The helical transmembrane segment at 96–116 (ISMSLDVASHWLHLHSSVVRG) threads the bilayer. At 117-139 (SESHKMIDLSGNPVLRIYYTSRP) the chain is on the cytoplasmic side. The chain crosses the membrane as a helical span at residues 140 to 160 (ALFTLCAGNELFYCLLYLFHF). Residues 161-174 (SEGPLVGSVGLFRM) are Lumenal-facing. The helical transmembrane segment at 175–195 (GLWVTAPIALLKSLISVIHLI) threads the bilayer. Over 196-213 (TAARNMAALDAADRAKKK) the chain is Cytoplasmic.

Belongs to the CDP-alcohol phosphatidyltransferase class-I family. The cofactor is Mn(2+). It depends on Mg(2+) as a cofactor. In terms of tissue distribution, detected in placenta (at protein level). Widely expressed. Higher expression in adult liver and skeletal muscle, slightly lower levels seen in pancreas, kidney, lung, placenta, brain, heart, leukocyte, colon, small intestine, ovary, testis, prostate, thymus and spleen. In fetus, expressed in kidney, liver, lung and brain.

It is found in the endoplasmic reticulum membrane. Its subcellular location is the cell membrane. The catalysed reaction is a CDP-1,2-diacyl-sn-glycerol + myo-inositol = a 1,2-diacyl-sn-glycero-3-phospho-(1D-myo-inositol) + CMP + H(+). With respect to regulation, inhibited by PtdIns (product inhibition), phosphatidylinositol phosphate, and nucleoside di- and tri-phosphates. Its function is as follows. Catalyzes the biosynthesis of phosphatidylinositol (PtdIns) as well as PtdIns:inositol exchange reaction. May thus act to reduce an excessive cellular PtdIns content. The exchange activity is due to the reverse reaction of PtdIns synthase and is dependent on CMP, which is tightly bound to the enzyme. The protein is CDP-diacylglycerol--inositol 3-phosphatidyltransferase of Homo sapiens (Human).